The primary structure comprises 1598 residues: Pentafunctional AROM polypeptide (1598 aa).

The segment at 1 to 384 (MGVPTKISIL…YEPRACTVSN (384 aa)) is 3-dehydroquinate synthase. NAD(+)-binding positions include 44–46 (DTN), 81–84 (ESSK), 114–116 (GGV), and Asp119. Arg130 serves as a coordination point for 7-phospho-2-dehydro-3-deoxy-D-arabino-heptonate. 139-140 (TT) provides a ligand contact to NAD(+). Residues Asp146 and Lys152 each contribute to the 7-phospho-2-dehydro-3-deoxy-D-arabino-heptonate site. Residue Lys161 coordinates NAD(+). Asn162 contacts 7-phospho-2-dehydro-3-deoxy-D-arabino-heptonate. NAD(+)-binding positions include 179 to 182 (FLNT) and Asn190. Glu194 contacts Zn(2+). Residues 194–197 (EVIK) and Lys250 each bind 7-phospho-2-dehydro-3-deoxy-D-arabino-heptonate. Residue Glu260 is the Proton acceptor; for 3-dehydroquinate synthase activity of the active site. 7-phospho-2-dehydro-3-deoxy-D-arabino-heptonate contacts are provided by residues 264–268 (RNLLN) and His271. A Zn(2+)-binding site is contributed by His271. Residue His275 is the Proton acceptor; for 3-dehydroquinate synthase activity of the active site. His287 and Lys356 together coordinate 7-phospho-2-dehydro-3-deoxy-D-arabino-heptonate. Residue His287 coordinates Zn(2+). The tract at residues 397 to 842 (VYPGFPKSLN…WDTLAQTFKV (446 aa)) is EPSP synthase. Cys824 acts as the For EPSP synthase activity in catalysis. Positions 867–1059 (AASIFIIGMR…RRKENTFFVS (193 aa)) are shikimate kinase. ATP is bound at residue 874–881 (GMRGAGKT). A 3-dehydroquinase region spans residues 1060–1280 (LTFPDLTPAS…AAPGQLSARE (221 aa)). The active-site Proton acceptor; for 3-dehydroquinate dehydratase activity is His1183. Residue Lys1211 is the Schiff-base intermediate with substrate; for 3-dehydroquinate dehydratase activity of the active site. A shikimate dehydrogenase region spans residues 1293–1598 (AKKFAVIGKP…GVSSSDDIIS (306 aa)).

In the N-terminal section; belongs to the sugar phosphate cyclases superfamily. Dehydroquinate synthase family. The protein in the 2nd section; belongs to the EPSP synthase family. This sequence in the 3rd section; belongs to the shikimate kinase family. It in the 4th section; belongs to the type-I 3-dehydroquinase family. In the C-terminal section; belongs to the shikimate dehydrogenase family. As to quaternary structure, homodimer. The cofactor is Zn(2+).

It is found in the cytoplasm. The enzyme catalyses 7-phospho-2-dehydro-3-deoxy-D-arabino-heptonate = 3-dehydroquinate + phosphate. It catalyses the reaction 3-dehydroquinate = 3-dehydroshikimate + H2O. It carries out the reaction shikimate + NADP(+) = 3-dehydroshikimate + NADPH + H(+). The catalysed reaction is shikimate + ATP = 3-phosphoshikimate + ADP + H(+). The enzyme catalyses 3-phosphoshikimate + phosphoenolpyruvate = 5-O-(1-carboxyvinyl)-3-phosphoshikimate + phosphate. Its pathway is metabolic intermediate biosynthesis; chorismate biosynthesis; chorismate from D-erythrose 4-phosphate and phosphoenolpyruvate: step 2/7. It functions in the pathway metabolic intermediate biosynthesis; chorismate biosynthesis; chorismate from D-erythrose 4-phosphate and phosphoenolpyruvate: step 3/7. It participates in metabolic intermediate biosynthesis; chorismate biosynthesis; chorismate from D-erythrose 4-phosphate and phosphoenolpyruvate: step 4/7. The protein operates within metabolic intermediate biosynthesis; chorismate biosynthesis; chorismate from D-erythrose 4-phosphate and phosphoenolpyruvate: step 5/7. Its pathway is metabolic intermediate biosynthesis; chorismate biosynthesis; chorismate from D-erythrose 4-phosphate and phosphoenolpyruvate: step 6/7. The AROM polypeptide catalyzes 5 consecutive enzymatic reactions in prechorismate polyaromatic amino acid biosynthesis. This is Pentafunctional AROM polypeptide from Paracoccidioides lutzii (strain ATCC MYA-826 / Pb01) (Paracoccidioides brasiliensis).